A 715-amino-acid polypeptide reads, in one-letter code: ATP-dependent DNA helicase Hel308 (715 aa).

The Q motif motif lies at methionine 1–alanine 29. ATP is bound by residues glutamine 28 and isoleucine 46–threonine 53. In terms of domain architecture, Helicase ATP-binding spans threonine 33–aspartate 197. Positions aspartate 145–histidine 148 match the DEAH box motif. Residues tryptophan 226–isoleucine 422 form the Helicase C-terminal domain.

It belongs to the helicase family. Hel308 subfamily. Monomer.

It catalyses the reaction Couples ATP hydrolysis with the unwinding of duplex DNA by translocating in the 3'-5' direction.. The catalysed reaction is ATP + H2O = ADP + phosphate + H(+). DNA-dependent ATPase and 3'-5' DNA helicase that may be involved in repair of stalled replication forks. In terms of biological role, rapidly unwinds double-stranded (ds)DNA with a 3'-overhang, has no strand reannealing capabilities. Binds single-stranded (ss)DNA, dsDNA with a 3'-overhang and ssRNA. This Pyrococcus abyssi (strain GE5 / Orsay) protein is ATP-dependent DNA helicase Hel308.